Consider the following 614-residue polypeptide: Probable ATP-dependent RNA helicase DDX5 (614 aa).

Residues 1-15 (MSSYSSDRDRGRDRG) show a composition bias toward basic and acidic residues. Positions 1-39 (MSSYSSDRDRGRDRGFGAPRFGGSRTGPLSGKKFGNPGE) are disordered. Serine 24 carries the phosphoserine modification. Position 32 is an N6-acetyllysine; alternate (lysine 32). Residue lysine 32 forms a Glycyl lysine isopeptide (Lys-Gly) (interchain with G-Cter in SUMO2); alternate linkage. 2 positions are modified to N6-acetyllysine: lysine 33 and lysine 40. Lysine 45 participates in a covalent cross-link: Glycyl lysine isopeptide (Lys-Gly) (interchain with G-Cter in SUMO2). Lysine 53 is covalently cross-linked (Glycyl lysine isopeptide (Lys-Gly) (interchain with G-Cter in SUMO2); alternate). A Glycyl lysine isopeptide (Lys-Gly) (interchain with G-Cter in SUMO); alternate cross-link involves residue lysine 53. Residue lysine 53 forms a Glycyl lysine isopeptide (Lys-Gly) (interchain with G-Cter in SUMO1); alternate linkage. The short motif at 94–122 (LNFYEANFPANVMDVIARQNFTEPTAIQA) is the Q motif element. ATP contacts are provided by residues 114–116 (FTE), glutamine 121, and 138–145 (AQTGSGKT). The 176-residue stretch at 125–300 (WPVALSGLDM…EDFLKDYIHI (176 aa)) folds into the Helicase ATP-binding domain. Lysine 236 is subject to N6-acetyllysine. A DEAD box motif is present at residues 248–251 (DEAD). Tyrosine 297 bears the Phosphotyrosine mark. Residues 328 to 475 (KLIRLMEEIM…AINPKLLQLV (148 aa)) form the Helicase C-terminal domain. Glycyl lysine isopeptide (Lys-Gly) (interchain with G-Cter in SUMO2) cross-links involve residues lysine 340, lysine 343, lysine 388, lysine 391, lysine 411, lysine 437, lysine 451, and lysine 470. The disordered stretch occupies residues 477–504 (DRGSGRSRGRGGMKDDRRDRYSAGKRGG). The transactivation domain stretch occupies residues 477–614 (DRGSGRSRGR…GYPMPTGYSQ (138 aa)). Phosphoserine is present on serine 480. The segment covering 488-498 (GMKDDRRDRYS) has biased composition (basic and acidic residues). A Glycyl lysine isopeptide (Lys-Gly) (interchain with G-Cter in SUMO2) cross-link involves residue lysine 523.

It belongs to the DEAD box helicase family. DDX5/DBP2 subfamily. Identified in the spliceosome C complex. Component of a ribonucleoprotein complex containing mRNAs and RNA-binding proteins including DDX5, HNRNPH2 and SRSF1 as well as splicing regulator ARVCF. Interacts with RBM4; the interaction occurs in an RNA-independent manner. Interacts with AGO1 and AGO2. Interacts with ESR1, AR, EP300, CREBBP, POLR2A, TP53, RUNX2 and HDAC1. Self-associates. Interacts with DDX17. Interacts with BRDT. The large PER complex involved in the repression of transcriptional termination is composed of at least PER2, CDK9, DDX5, DHX9, NCBP1 and POLR2A (active). Interacts with DHX36; this interaction occurs in a RNA-dependent manner. Interacts with NUPR1. Interacts with ERCC6. Interacts with DDX3X in the cytoplasm; this interaction may be more efficient when both proteins are unphosphorylated. In terms of processing, sumoylated; sumoylation, promoted by PIAS1, promotes interaction with HDAC1 and transcriptional repression activity. Sumoylation also significantly increases stability, and reduces polyubiquitination. Post-translationally, polyubiquitinated, leading to proteasomal degradation. Weakly phosphorylated in the G1/S phase of the cell cycle and much more at G2/M, especially at Thr and Tyr residues.

It is found in the nucleus. It localises to the nucleolus. The protein resides in the cytoplasm. The enzyme catalyses ATP + H2O = ADP + phosphate + H(+). Involved in the alternative regulation of pre-mRNA splicing; its RNA helicase activity is necessary for increasing tau exon 10 inclusion and occurs in a RBM4-dependent manner. Binds to the tau pre-mRNA in the stem-loop region downstream of exon 10. The rate of ATP hydrolysis is highly stimulated by single-stranded RNA. Involved in transcriptional regulation; the function is independent of the RNA helicase activity. Transcriptional coactivator for androgen receptor AR but probably not ESR1. Synergizes with DDX17 and SRA1 RNA to activate MYOD1 transcriptional activity and involved in skeletal muscle differentiation. Transcriptional coactivator for p53/TP53 and involved in p53/TP53 transcriptional response to DNA damage and p53/TP53-dependent apoptosis. Transcriptional coactivator for RUNX2 and involved in regulation of osteoblast differentiation. Acts as a transcriptional repressor in a promoter-specific manner; the function probably involves association with histone deacetylases, such as HDAC1. As component of a large PER complex is involved in the inhibition of 3' transcriptional termination of circadian target genes such as PER1 and NR1D1 and the control of the circadian rhythms. This chain is Probable ATP-dependent RNA helicase DDX5 (Ddx5), found in Mus musculus (Mouse).